Reading from the N-terminus, the 305-residue chain is MTRKLEIPESRDLPDWSHIGGGKVRELYVHRQYKNILLMFASNRVSAFDFVLEPEIPEKGRMLTQMSNWWFRKLPAENHLLENYDQELYRDLASHIPSHILERSTICRKMDIIPFEFVIRGYLTGSAWADYLENNTVYGIKLKGKFRQGDRLPGPIFTPTTKSRTKDTPVRYEDLVNAIGLSHAQQLREMCTDYYTTAEQIARNKGLIIADAKFEFGIAEGKVYLADELLTADSARYWDINSWGQFDLPIERRLDSFDKQAVRDWVKCNSGKNITPQNITPLRLPQELIQTVYKKYKTLLAKLTG.

It belongs to the SAICAR synthetase family.

It carries out the reaction 5-amino-1-(5-phospho-D-ribosyl)imidazole-4-carboxylate + L-aspartate + ATP = (2S)-2-[5-amino-1-(5-phospho-beta-D-ribosyl)imidazole-4-carboxamido]succinate + ADP + phosphate + 2 H(+). The protein operates within purine metabolism; IMP biosynthesis via de novo pathway; 5-amino-1-(5-phospho-D-ribosyl)imidazole-4-carboxamide from 5-amino-1-(5-phospho-D-ribosyl)imidazole-4-carboxylate: step 1/2. This Tropheryma whipplei (strain Twist) (Whipple's bacillus) protein is Phosphoribosylaminoimidazole-succinocarboxamide synthase.